The chain runs to 242 residues: Small ribosomal subunit protein uS2 (242 aa).

Belongs to the universal ribosomal protein uS2 family.

In Shewanella woodyi (strain ATCC 51908 / MS32), this protein is Small ribosomal subunit protein uS2.